Reading from the N-terminus, the 254-residue chain is Thiazole synthase (254 aa).

K95 functions as the Schiff-base intermediate with DXP in the catalytic mechanism. Residues G156, A182–G183, and N204–T205 each bind 1-deoxy-D-xylulose 5-phosphate.

This sequence belongs to the ThiG family. In terms of assembly, homotetramer. Forms heterodimers with either ThiH or ThiS.

Its subcellular location is the cytoplasm. The enzyme catalyses [ThiS sulfur-carrier protein]-C-terminal-Gly-aminoethanethioate + 2-iminoacetate + 1-deoxy-D-xylulose 5-phosphate = [ThiS sulfur-carrier protein]-C-terminal Gly-Gly + 2-[(2R,5Z)-2-carboxy-4-methylthiazol-5(2H)-ylidene]ethyl phosphate + 2 H2O + H(+). Its pathway is cofactor biosynthesis; thiamine diphosphate biosynthesis. Functionally, catalyzes the rearrangement of 1-deoxy-D-xylulose 5-phosphate (DXP) to produce the thiazole phosphate moiety of thiamine. Sulfur is provided by the thiocarboxylate moiety of the carrier protein ThiS. In vitro, sulfur can be provided by H(2)S. This Shewanella sp. (strain MR-7) protein is Thiazole synthase.